The chain runs to 101 residues: NADH-quinone oxidoreductase subunit K (101 aa).

The next 3 membrane-spanning stretches (helical) occupy residues 4-24, 30-50, and 61-81; these read LSHF…GIFL, IVLL…FIAF, and VFVF…LAIL.

The protein belongs to the complex I subunit 4L family. In terms of assembly, NDH-1 is composed of 14 different subunits. Subunits NuoA, H, J, K, L, M, N constitute the membrane sector of the complex.

It localises to the cell inner membrane. It carries out the reaction a quinone + NADH + 5 H(+)(in) = a quinol + NAD(+) + 4 H(+)(out). Functionally, NDH-1 shuttles electrons from NADH, via FMN and iron-sulfur (Fe-S) centers, to quinones in the respiratory chain. The immediate electron acceptor for the enzyme in this species is believed to be ubiquinone. Couples the redox reaction to proton translocation (for every two electrons transferred, four hydrogen ions are translocated across the cytoplasmic membrane), and thus conserves the redox energy in a proton gradient. This chain is NADH-quinone oxidoreductase subunit K, found in Thiobacillus denitrificans (strain ATCC 25259 / T1).